The sequence spans 859 residues: Cadherin-related family member 1 (859 aa).

A signal peptide spans 1 to 19 (MRRCRWAALALGLLRLCLA). At 20–700 (QANFAPHFFD…LIQTKDNPMK (681 aa)) the chain is on the extracellular side. Cadherin domains lie at 36–135 (NGNM…APRF), 136–246 (IQEP…APVF), 247–353 (VGTP…PPTF), 359–472 (PQNR…VPKF), 473–576 (DSLY…PPQF), and 573–688 (PPQF…SPMA). N-linked (GlcNAc...) asparagine glycosylation is found at Asn-58 and Asn-89. A glycan (N-linked (GlcNAc...) asparagine) is linked at Asn-296. Residues 701 to 721 (AVGVLAGTMATVVAITVLIST) form a helical membrane-spanning segment. The Cytoplasmic segment spans residues 722 to 859 (ATFWRNKKSN…KKSVHNKAYF (138 aa)). The disordered stretch occupies residues 770–838 (KEKPPNENCN…PKTMGSPVQS (69 aa)). A compositionally biased stretch (low complexity) spans 775–791 (NENCNNNSPESSLLPRA).

Interacts with PROM1. In terms of processing, undergoes proteolytic cleavage; produces a soluble 95 kDa N-terminal fragment and a 25 kDa cell-associated C-terminal fragment.

It is found in the cell membrane. In terms of biological role, potential calcium-dependent cell-adhesion protein. May be required for the structural integrity of the outer segment (OS) of photoreceptor cells. The polypeptide is Cadherin-related family member 1 (Homo sapiens (Human)).